The following is a 253-amino-acid chain: tRNA (guanine-N(1)-)-methyltransferase (253 aa).

S-adenosyl-L-methionine-binding positions include G111 and 131–136; that span reads LGDFVL.

The protein belongs to the RNA methyltransferase TrmD family. As to quaternary structure, homodimer.

It is found in the cytoplasm. The enzyme catalyses guanosine(37) in tRNA + S-adenosyl-L-methionine = N(1)-methylguanosine(37) in tRNA + S-adenosyl-L-homocysteine + H(+). Functionally, specifically methylates guanosine-37 in various tRNAs. The protein is tRNA (guanine-N(1)-)-methyltransferase of Synechococcus sp. (strain JA-3-3Ab) (Cyanobacteria bacterium Yellowstone A-Prime).